The chain runs to 540 residues: Putative BTB/POZ domain-containing protein R224 (540 aa).

One can recognise a BTB domain in the interval 16–88 (TDLELTLIDE…FYKNPIKYKN (73 aa)). Residues 356–376 (IFVSLLNDIIFVLSSINMYFI) traverse the membrane as a helical segment.

This sequence belongs to the mimivirus BTB/WD family.

It localises to the membrane. In Acanthamoeba polyphaga (Amoeba), this protein is Putative BTB/POZ domain-containing protein R224.